The sequence spans 336 residues: Aromatic prenyltransferase (336 aa).

It belongs to the aromatic prenyltransferase family.

Functionally, prenyltransferase that attaches isoprenoid moieties to carbon atoms of aromatic substrates in an enzyme-catalyzed Friedel-Crafts reaction. Shows specificity for dimethylallyl diphosphate (DMAPP) and does not accept geranyl diphosphate (GPP) or isopentenyl diphosphate (IPP). Prenylates the artificial substrate 2,7-dihydroxynaphthalene (2,7-DHN), as well as dihydrophenazine-1-carboxylic acid at a lower level. Only traces of products are detected with aspulvinone E, flaviolin, or 4-hydroxybenzoic acid as substrates; and no product is formed with L-tryptophan, L-tyrosine, or 4-hydroxyphenylpyruvate. Ptf seems no to be involved in the prenylation reaction in the biosynthesis of aspulvinone H and J and the physiological function of ptf remains unknown. This is Aromatic prenyltransferase from Aspergillus terreus (strain NIH 2624 / FGSC A1156).